A 508-amino-acid chain; its full sequence is BICD family-like cargo adapter 2 (508 aa).

Positions 1 to 22 (MSSPDGPSFPSGPLSGGASPSG) are enriched in low complexity. Disordered stretches follow at residues 1 to 27 (MSSP…EGFF), 132 to 152 (LGEQ…ALSE), and 300 to 351 (AHSL…TSLS). 2 coiled-coil regions span residues 64–300 (AAEL…SELA) and 353–458 (AEIL…DMQV). The span at 135–149 (QRSEQQDSGRERARA) shows a compositional bias: basic and acidic residues. The interval 470-491 (KELSASASSSTPRRAAPRFSLR) is disordered. The span at 473–489 (SASASSSTPRRAAPRFS) shows a compositional bias: low complexity.

It belongs to the BICDR family. As to quaternary structure, interacts with RAB13.

The polypeptide is BICD family-like cargo adapter 2 (BICDL2) (Homo sapiens (Human)).